Consider the following 538-residue polypeptide: D-alanyl-D-alanine carboxypeptidase (538 aa).

Residues 1-21 (MKQSSPEPLRPRRTGGRGGAR) form a disordered region. A signal peptide spans 1–49 (MKQSSPEPLRPRRTGGRGGARRAAALVTIPLLPMTLLGASPALADASGA). The active-site Acyl-ester intermediate is Ser98. Lys101 functions as the Proton acceptor in the catalytic mechanism. Residues 146–319 (TLSAEDLDAM…KGDVGLGGVP (174 aa)) form an absent in class-A beta-lactamases region. Ser347 is an active-site residue. Lys459 provides a ligand contact to substrate. A propeptide spans 516-538 (GARMMRGPVQGSGELECSWVQAC) (removed in mature form).

Belongs to the peptidase S13 family.

The protein resides in the secreted. It catalyses the reaction Preferential cleavage: (Ac)2-L-Lys-D-Ala-|-D-Ala. Also transpeptidation of peptidyl-alanyl moieties that are N-acyl substituents of D-alanine.. Its pathway is cell wall biogenesis; peptidoglycan biosynthesis. With respect to regulation, inhibited by benzylpenicillin, cephaloridine, ampicillin and cetiofur. In terms of biological role, removes C-terminal D-alanyl residues from sugar-peptide cell wall precursors. The sequence is that of D-alanyl-D-alanine carboxypeptidase (dac) from Actinomadura sp. (strain R39).